Reading from the N-terminus, the 489-residue chain is ATF/CREB activator 1 (489 aa).

Residues 384-447 form the bZIP domain; that stretch reads AWKRARLLER…QKMKKISRLH (64 aa). Residues 386 to 406 are basic motif; sequence KRARLLERNRIAASKCRQRKK. The tract at residues 412-419 is leucine-zipper; the sequence is LQREFDQI.

It belongs to the bZIP family.

The protein localises to the nucleus. Its function is as follows. Transcriptional activator of promoters containing ATF/CREB sites. Can independently stimulate transcription through ATF/CREB sites. Important for a variety of biological functions including growth on non-optimal carbon sources. Regulates the expression of COS8. Has efficient silencing blocking activities. This Saccharomyces cerevisiae (strain ATCC 204508 / S288c) (Baker's yeast) protein is ATF/CREB activator 1 (ACA1).